A 1393-amino-acid polypeptide reads, in one-letter code: DNA-directed RNA polymerase subunit beta (1393 aa).

Belongs to the RNA polymerase beta chain family. The RNAP catalytic core consists of 2 alpha, 1 beta, 1 beta' and 1 omega subunit. When a sigma factor is associated with the core the holoenzyme is formed, which can initiate transcription.

It carries out the reaction RNA(n) + a ribonucleoside 5'-triphosphate = RNA(n+1) + diphosphate. Its function is as follows. DNA-dependent RNA polymerase catalyzes the transcription of DNA into RNA using the four ribonucleoside triphosphates as substrates. This Rhodospirillum rubrum (strain ATCC 11170 / ATH 1.1.1 / DSM 467 / LMG 4362 / NCIMB 8255 / S1) protein is DNA-directed RNA polymerase subunit beta.